Here is a 191-residue protein sequence, read N- to C-terminus: Thymidine kinase (191 aa).

ATP is bound by residues 9–16 (GSMNSGKT) and 85–88 (DESQ). The Proton acceptor role is filled by E86. Zn(2+) is bound by residues C143, C146, C181, and C184.

It belongs to the thymidine kinase family. In terms of assembly, homotetramer.

It localises to the cytoplasm. The enzyme catalyses thymidine + ATP = dTMP + ADP + H(+). In Listeria innocua serovar 6a (strain ATCC BAA-680 / CLIP 11262), this protein is Thymidine kinase.